Reading from the N-terminus, the 404-residue chain is 5-aminolevulinate synthase (404 aa).

Arg-21 and Ser-136 together coordinate substrate. The pyridoxal 5'-phosphate site is built by Ser-188, His-216, and Thr-244. Residue Lys-247 is part of the active site. An N6-(pyridoxal phosphate)lysine modification is found at Lys-247. Positions 276 and 277 each coordinate pyridoxal 5'-phosphate. Residue Thr-362 participates in substrate binding.

This sequence belongs to the class-II pyridoxal-phosphate-dependent aminotransferase family. In terms of assembly, homodimer. The cofactor is pyridoxal 5'-phosphate.

The enzyme catalyses succinyl-CoA + glycine + H(+) = 5-aminolevulinate + CO2 + CoA. Its pathway is porphyrin-containing compound metabolism; protoporphyrin-IX biosynthesis; 5-aminolevulinate from glycine: step 1/1. This chain is 5-aminolevulinate synthase (hemA), found in Rhizobium meliloti (strain 1021) (Ensifer meliloti).